We begin with the raw amino-acid sequence, 168 residues long: Ubiquitin-fold modifier-conjugating enzyme 1 (168 aa).

Cys-119 serves as the catalytic Glycyl thioester intermediate.

This sequence belongs to the ubiquitin-conjugating enzyme family. UFC1 subfamily.

Functionally, E2-like enzyme which forms an intermediate with UFM1 via a thioester linkage. In Drosophila grimshawi (Hawaiian fruit fly), this protein is Ubiquitin-fold modifier-conjugating enzyme 1.